The following is a 263-amino-acid chain: Ribonuclease HII (263 aa).

Residues 74–262 (EHVAGLDEVG…VQETAATRQT (189 aa)) enclose the RNase H type-2 domain. A divalent metal cation is bound by residues Asp-80, Glu-81, and Asp-172.

It belongs to the RNase HII family. The cofactor is Mn(2+). Mg(2+) is required as a cofactor.

Its subcellular location is the cytoplasm. It carries out the reaction Endonucleolytic cleavage to 5'-phosphomonoester.. In terms of biological role, endonuclease that specifically degrades the RNA of RNA-DNA hybrids. This chain is Ribonuclease HII (rnhB), found in Halalkalibacterium halodurans (strain ATCC BAA-125 / DSM 18197 / FERM 7344 / JCM 9153 / C-125) (Bacillus halodurans).